A 334-amino-acid chain; its full sequence is Fructose-1,6-bisphosphatase class 1 2 (334 aa).

Mg(2+) is bound by residues glutamate 92, aspartate 114, leucine 116, and aspartate 117. Substrate-binding positions include 117 to 120 (DGSS), asparagine 208, and lysine 274. Residue glutamate 280 participates in Mg(2+) binding.

Belongs to the FBPase class 1 family. Homotetramer. It depends on Mg(2+) as a cofactor.

The protein resides in the cytoplasm. The catalysed reaction is beta-D-fructose 1,6-bisphosphate + H2O = beta-D-fructose 6-phosphate + phosphate. The protein operates within carbohydrate biosynthesis; gluconeogenesis. In Albidiferax ferrireducens (strain ATCC BAA-621 / DSM 15236 / T118) (Rhodoferax ferrireducens), this protein is Fructose-1,6-bisphosphatase class 1 2.